Consider the following 396-residue polypeptide: L-aspartate--glyoxylate aminotransferase (396 aa).

Lys-196 bears the N6-(pyridoxal phosphate)lysine mark.

The protein belongs to the class-V pyridoxal-phosphate-dependent aminotransferase family. Requires pyridoxal 5'-phosphate as cofactor.

The catalysed reaction is oxaloacetate + glycine = glyoxylate + L-aspartate. Its function is as follows. Catalyzes the transamination of glyoxylate into glycine using L-aspartate as the preferred amino group donor. Is essential for the growth of P.denitrificans in the presence of glycolate and glyoxylate since it functions in glyoxylate assimilation via the beta-hydroxyaspartate cycle (BHAC). Can catalyze the reverse reaction in vitro, and also use L-serine and L-glutamate as amino group donor, but with much less efficiency than L-aspartate. This is L-aspartate--glyoxylate aminotransferase from Paracoccus denitrificans (strain Pd 1222).